Consider the following 166-residue polypeptide: Phospholipase A2 inhibitor A4/A5 (166 aa).

The signal sequence occupies residues 1–19 (MRLILLSGLLLLGTFLVNG). Residues 46-161 (LFHAFLTVHK…CDDNLLVVCE (116 aa)) form the C-type lectin domain. Cystine bridges form between C83-C160 and C138-C152. N122 carries an N-linked (GlcNAc...) asparagine glycan.

The protein belongs to the alpha-type phospholipase A2 inhibitor family. As to quaternary structure, homotrimer; non-covalently linked. Expressed by the liver.

Its subcellular location is the secreted. Its function is as follows. This phospholipase A2 inhibitor binds directly phospholipase A2 in the presence or absence of calcium. The polypeptide is Phospholipase A2 inhibitor A4/A5 (Crotalus durissus terrificus (South American rattlesnake)).